A 115-amino-acid chain; its full sequence is NAD(P)H-quinone oxidoreductase subunit M (115 aa).

Belongs to the complex I NdhM subunit family. In terms of assembly, NDH-1 can be composed of about 15 different subunits; different subcomplexes with different compositions have been identified which probably have different functions.

Its subcellular location is the cellular thylakoid membrane. The catalysed reaction is a plastoquinone + NADH + (n+1) H(+)(in) = a plastoquinol + NAD(+) + n H(+)(out). It catalyses the reaction a plastoquinone + NADPH + (n+1) H(+)(in) = a plastoquinol + NADP(+) + n H(+)(out). Functionally, NDH-1 shuttles electrons from an unknown electron donor, via FMN and iron-sulfur (Fe-S) centers, to quinones in the respiratory and/or the photosynthetic chain. The immediate electron acceptor for the enzyme in this species is believed to be plastoquinone. Couples the redox reaction to proton translocation, and thus conserves the redox energy in a proton gradient. Cyanobacterial NDH-1 also plays a role in inorganic carbon-concentration. This is NAD(P)H-quinone oxidoreductase subunit M from Parasynechococcus marenigrum (strain WH8102).